The primary structure comprises 730 residues: MSVLSKYVDRIAEKCEHNGFTKHAFSYALVTSAILALTIKVTIPYVKNVNTTSSVRTQKGKTNGQLSPSTRDSSEEDFKLAEAEKLLVAQQLKKKATNNLVEPGLNKEFLKHLQMLAKIMIPQAFCYETGLLSVHTFCLISRTFLSIYVAALEGALVKFIVRKDIKQFALVLLKWFGIAIPATFVNSMIRFLESKLSLAFRTRLVRHSYRLYFKNQNYYRVSNLDGRIENADHRLTEDISVFANSVAHLYSSLTKPCFDLMLIGLALMRSSKKMKANIITGPALSIGVIALTAHILRIVSPKFGQLVSEEANRYGYLRHIHSRIITNAEEIAFYGGHKVEMQQLRQAYNRLVNQMTTIFNQKLWFIMLEQFFMKYVWSGTGMIMVSLPILTGSDVGLGTVPNTAISESRVSERTQYLTTARNLLISAADAIERLMSSYKEIVSLAGYTFRVAGMMDVFEETALGVYCKTSVMESNQSNGIIEFRNGKPIAKGRIIYSDDPKNMSISLRAVPVVTPNCDIVVPKLTLCIEPGVHLLITGPNGCGKSSLFRILSGLWPIYAGELHIPRPVKDVPCMFYIPQRPYMSIGSLCDQIIYPDTREDMKRKHITENELRSILKMVSLEHIAQRDSFDVVRDWKDILSGGEKQRMAIARLFYHRPRYALLDECTSAVSIDVESSIYEIAKGMGITLLTITHRPTLWKYHTHILEFDGLGNWQFRKMNSDEEQKGQFLS.

4 helical membrane-spanning segments follow: residues 24–44, 137–157, 169–189, and 276–296; these read AFSYALVTSAILALTIKVTIP, FCLISRTFLSIYVAALEGALV, ALVLLKWFGIAIPATFVNSMI, and ANIITGPALSIGVIALTAHIL. An ABC transmembrane type-1 domain is found at 136–373; the sequence is TFCLISRTFL…WFIMLEQFFM (238 aa). Residues 505-727 form the ABC transporter domain; it reads ISLRAVPVVT…MNSDEEQKGQ (223 aa). 538–545 contributes to the ATP binding site; the sequence is GPNGCGKS.

It belongs to the ABC transporter superfamily. ABCD family. Peroxisomal fatty acyl CoA transporter (TC 3.A.1.203) subfamily.

The protein localises to the peroxisome membrane. It carries out the reaction an acyl-CoA(out) + ATP + H2O = an acyl-CoA(in) + ADP + phosphate + H(+). Plays a role in the transport of free very-long-chain fatty acids (VLCFAs) as well as their CoA-esters across the peroxisomal membrane by acting as an ATP-specific binding subunit releasing ADP after ATP hydrolysis. Thus, plays a role in regulation of VLCFAs and energy metabolism namely, in the degradation and biosynthesis of fatty acids by beta-oxidation, mitochondrial function and microsomal fatty acid elongation. This chain is ATP-binding cassette sub-family D member 1, found in Drosophila melanogaster (Fruit fly).